Reading from the N-terminus, the 212-residue chain is Thiamine-phosphate synthase (212 aa).

Residues 41 to 45 (QYREK) and aspartate 76 each bind 4-amino-2-methyl-5-(diphosphooxymethyl)pyrimidine. Mg(2+) is bound by residues aspartate 77 and aspartate 96. Serine 114 lines the 4-amino-2-methyl-5-(diphosphooxymethyl)pyrimidine pocket. 141-143 (TTS) provides a ligand contact to 2-[(2R,5Z)-2-carboxy-4-methylthiazol-5(2H)-ylidene]ethyl phosphate. Lysine 144 contributes to the 4-amino-2-methyl-5-(diphosphooxymethyl)pyrimidine binding site. Residues glycine 172 and 192–193 (IS) each bind 2-[(2R,5Z)-2-carboxy-4-methylthiazol-5(2H)-ylidene]ethyl phosphate.

This sequence belongs to the thiamine-phosphate synthase family. Mg(2+) is required as a cofactor.

It carries out the reaction 2-[(2R,5Z)-2-carboxy-4-methylthiazol-5(2H)-ylidene]ethyl phosphate + 4-amino-2-methyl-5-(diphosphooxymethyl)pyrimidine + 2 H(+) = thiamine phosphate + CO2 + diphosphate. The catalysed reaction is 2-(2-carboxy-4-methylthiazol-5-yl)ethyl phosphate + 4-amino-2-methyl-5-(diphosphooxymethyl)pyrimidine + 2 H(+) = thiamine phosphate + CO2 + diphosphate. The enzyme catalyses 4-methyl-5-(2-phosphooxyethyl)-thiazole + 4-amino-2-methyl-5-(diphosphooxymethyl)pyrimidine + H(+) = thiamine phosphate + diphosphate. The protein operates within cofactor biosynthesis; thiamine diphosphate biosynthesis; thiamine phosphate from 4-amino-2-methyl-5-diphosphomethylpyrimidine and 4-methyl-5-(2-phosphoethyl)-thiazole: step 1/1. In terms of biological role, condenses 4-methyl-5-(beta-hydroxyethyl)thiazole monophosphate (THZ-P) and 2-methyl-4-amino-5-hydroxymethyl pyrimidine pyrophosphate (HMP-PP) to form thiamine monophosphate (TMP). This Leuconostoc citreum (strain KM20) protein is Thiamine-phosphate synthase.